The following is a 92-amino-acid chain: Co-chaperonin GroES (92 aa).

The protein belongs to the GroES chaperonin family. Heptamer of 7 subunits arranged in a ring. Interacts with the chaperonin GroEL.

The protein resides in the cytoplasm. Together with the chaperonin GroEL, plays an essential role in assisting protein folding. The GroEL-GroES system forms a nano-cage that allows encapsulation of the non-native substrate proteins and provides a physical environment optimized to promote and accelerate protein folding. GroES binds to the apical surface of the GroEL ring, thereby capping the opening of the GroEL channel. This is Co-chaperonin GroES from Thermotoga neapolitana.